Consider the following 476-residue polypeptide: Bifunctional protein HldE (476 aa).

The tract at residues 1–318 (MKVTLPDFRR…ENAIRGRAET (318 aa)) is ribokinase. 195–198 (NLSE) contacts ATP. Aspartate 264 is a catalytic residue. The segment at 344 to 476 (MTNGIFDILH…IIQSIKNGRG (133 aa)) is cytidylyltransferase.

It in the N-terminal section; belongs to the carbohydrate kinase PfkB family. In the C-terminal section; belongs to the cytidylyltransferase family. As to quaternary structure, homodimer.

It carries out the reaction D-glycero-beta-D-manno-heptose 7-phosphate + ATP = D-glycero-beta-D-manno-heptose 1,7-bisphosphate + ADP + H(+). The enzyme catalyses D-glycero-beta-D-manno-heptose 1-phosphate + ATP + H(+) = ADP-D-glycero-beta-D-manno-heptose + diphosphate. The protein operates within nucleotide-sugar biosynthesis; ADP-L-glycero-beta-D-manno-heptose biosynthesis; ADP-L-glycero-beta-D-manno-heptose from D-glycero-beta-D-manno-heptose 7-phosphate: step 1/4. It participates in nucleotide-sugar biosynthesis; ADP-L-glycero-beta-D-manno-heptose biosynthesis; ADP-L-glycero-beta-D-manno-heptose from D-glycero-beta-D-manno-heptose 7-phosphate: step 3/4. In terms of biological role, catalyzes the phosphorylation of D-glycero-D-manno-heptose 7-phosphate at the C-1 position to selectively form D-glycero-beta-D-manno-heptose-1,7-bisphosphate. Catalyzes the ADP transfer from ATP to D-glycero-beta-D-manno-heptose 1-phosphate, yielding ADP-D-glycero-beta-D-manno-heptose. This Yersinia pestis bv. Antiqua (strain Antiqua) protein is Bifunctional protein HldE.